Consider the following 280-residue polypeptide: Undecaprenyl-diphosphatase (280 aa).

Helical transmembrane passes span 1 to 21 (MTIL…FLPV), 41 to 61 (FVRA…LVLY), 87 to 107 (FDLY…GFLF), 115 to 135 (LGSV…MLFV), 147 to 167 (ITYP…FLPG), 186 to 206 (KAAA…ATLL), 226 to 246 (VLLV…KFFI), and 260 to 280 (YRIL…SLAV).

Belongs to the UppP family.

The protein resides in the cell inner membrane. It carries out the reaction di-trans,octa-cis-undecaprenyl diphosphate + H2O = di-trans,octa-cis-undecaprenyl phosphate + phosphate + H(+). Functionally, catalyzes the dephosphorylation of undecaprenyl diphosphate (UPP). Confers resistance to bacitracin. The protein is Undecaprenyl-diphosphatase of Porphyromonas gingivalis (strain ATCC BAA-308 / W83).